The sequence spans 214 residues: Glycerol-3-phosphate acyltransferase (214 aa).

A run of 5 helical transmembrane segments spans residues 4 to 24 (LIVA…IVSA), 52 to 72 (AAIL…WFVV), 82 to 102 (DTSV…PAFF), 118 to 138 (LAIN…VAFF), and 159 to 179 (FLFG…LLVW).

Belongs to the PlsY family. As to quaternary structure, probably interacts with PlsX.

It localises to the cell inner membrane. The enzyme catalyses an acyl phosphate + sn-glycerol 3-phosphate = a 1-acyl-sn-glycero-3-phosphate + phosphate. It participates in lipid metabolism; phospholipid metabolism. Functionally, catalyzes the transfer of an acyl group from acyl-phosphate (acyl-PO(4)) to glycerol-3-phosphate (G3P) to form lysophosphatidic acid (LPA). This enzyme utilizes acyl-phosphate as fatty acyl donor, but not acyl-CoA or acyl-ACP. In Paraburkholderia xenovorans (strain LB400), this protein is Glycerol-3-phosphate acyltransferase.